The primary structure comprises 185 residues: Small ribosomal subunit protein bS6 (185 aa).

Residues 115-141 (AAQKAAAEKAEAARLEAEKAAEEEAAK) are compositionally biased toward basic and acidic residues. Residues 115–185 (AAQKAAAEKA…EEPKSDEEDA (71 aa)) form a disordered region. The segment covering 142-169 (AAEAQAKEAPAAEAPAEEAPAAEAPAEA) has biased composition (low complexity). A compositionally biased stretch (acidic residues) spans 170–185 (PAEEPAEEPKSDEEDA).

The protein belongs to the bacterial ribosomal protein bS6 family.

Functionally, binds together with bS18 to 16S ribosomal RNA. This Desulfatibacillum aliphaticivorans protein is Small ribosomal subunit protein bS6.